The sequence spans 246 residues: 1-(5-phosphoribosyl)-5-[(5-phosphoribosylamino)methylideneamino] imidazole-4-carboxamide isomerase (246 aa).

The active-site Proton acceptor is Asp8. The active-site Proton donor is the Asp130.

This sequence belongs to the HisA/HisF family.

The protein localises to the cytoplasm. The enzyme catalyses 1-(5-phospho-beta-D-ribosyl)-5-[(5-phospho-beta-D-ribosylamino)methylideneamino]imidazole-4-carboxamide = 5-[(5-phospho-1-deoxy-D-ribulos-1-ylimino)methylamino]-1-(5-phospho-beta-D-ribosyl)imidazole-4-carboxamide. It participates in amino-acid biosynthesis; L-histidine biosynthesis; L-histidine from 5-phospho-alpha-D-ribose 1-diphosphate: step 4/9. The chain is 1-(5-phosphoribosyl)-5-[(5-phosphoribosylamino)methylideneamino] imidazole-4-carboxamide isomerase from Hydrogenovibrio crunogenus (strain DSM 25203 / XCL-2) (Thiomicrospira crunogena).